The sequence spans 266 residues: Hydroxyethylthiazole kinase (266 aa).

Residue Met-43 coordinates substrate. Residues Arg-119 and Thr-166 each contribute to the ATP site. A substrate-binding site is contributed by Gly-193.

The protein belongs to the Thz kinase family. The cofactor is Mg(2+).

The enzyme catalyses 5-(2-hydroxyethyl)-4-methylthiazole + ATP = 4-methyl-5-(2-phosphooxyethyl)-thiazole + ADP + H(+). It functions in the pathway cofactor biosynthesis; thiamine diphosphate biosynthesis; 4-methyl-5-(2-phosphoethyl)-thiazole from 5-(2-hydroxyethyl)-4-methylthiazole: step 1/1. Functionally, catalyzes the phosphorylation of the hydroxyl group of 4-methyl-5-beta-hydroxyethylthiazole (THZ). The sequence is that of Hydroxyethylthiazole kinase from Methanococcus maripaludis (strain C6 / ATCC BAA-1332).